The following is a 417-amino-acid chain: UPF0597 protein FMG_0209 (417 aa).

Belongs to the UPF0597 family.

This chain is UPF0597 protein FMG_0209, found in Finegoldia magna (strain ATCC 29328 / DSM 20472 / WAL 2508) (Peptostreptococcus magnus).